The sequence spans 314 residues: Small ribosomal subunit biogenesis GTPase RsgA (314 aa).

Positions 1–21 are disordered; it reads MKRAPTKQPAKPAARGGERAQ. The CP-type G domain occupies 85 to 246; that stretch reads SDQFKSKLFA…LIDSPGFQEF (162 aa). GTP-binding positions include 134–137 and 188–196; these read NKID and GQSGMGKST. Zn(2+) is bound by residues Cys-270, Cys-275, His-277, and Cys-283.

Belongs to the TRAFAC class YlqF/YawG GTPase family. RsgA subfamily. Monomer. Associates with 30S ribosomal subunit, binds 16S rRNA. Zn(2+) is required as a cofactor.

The protein localises to the cytoplasm. Functionally, one of several proteins that assist in the late maturation steps of the functional core of the 30S ribosomal subunit. Helps release RbfA from mature subunits. May play a role in the assembly of ribosomal proteins into the subunit. Circularly permuted GTPase that catalyzes slow GTP hydrolysis, GTPase activity is stimulated by the 30S ribosomal subunit. The chain is Small ribosomal subunit biogenesis GTPase RsgA from Burkholderia pseudomallei (strain 1106a).